Here is a 1544-residue protein sequence, read N- to C-terminus: Zinc finger protein GLI2 (1544 aa).

The disordered stretch occupies residues 1–26 (METSAPAPALEKKEAKSGLLEDSSFP). S145, S230, S232, and S238 each carry phosphoserine. Positions 338–364 (SSSSSNCLNDANQNKQNSESAVSSTVN) are disordered. S385 carries the phosphoserine; by DYRK2 modification. The C2H2-type 1 zinc-finger motif lies at 417 to 444 (TNCHWADCTKEYDTQEQLVHHINNEHIH). The C2H2-type 2; degenerate zinc finger occupies 455–477 (QACTREQKPFKAQYMLVVHMRRH). 3 C2H2-type zinc fingers span residues 483-507 (HKCTFEGCSKAYSRLENLKTHLRSH), 513-538 (YVCEHEGCNKAFSNASDRAKHQNRTH), and 544-569 (YICKIPGCTKRYTDPSSLRKHVKTVH). Disordered regions lie at residues 557–619 (DPSS…TSHT) and 635–682 (GLCQ…ALAD). Basic and acidic residues predominate over residues 569–585 (HGPDAHVTKKQRNDVHV). Residues 637-657 (CQSSPGAQSSCSSEPSPLGSA) show a composition bias toward low complexity. Residue S707 is modified to Phosphoserine. Position 708 is a phosphothreonine (T708). K740 bears the N6-acetyllysine; by EP300 mark. Disordered stretches follow at residues 781–800 (SQLQERRDSSTSTMSSAYTV), 805–861 (SGIS…PGLL), 908–963 (ALPG…RRPD), 995–1016 (VQSHPSVDSNLTRNAYSPRPPS), 1166–1220 (FGQY…CLGM), and 1422–1457 (GGCPAVQPQPPQPQACSDSIQPEPLPSPGVNQVSST). Composition is skewed to polar residues over residues 790-800 (STSTMSSAYTV) and 805-814 (SGISPYFSSR). Basic and acidic residues predominate over residues 954–963 (RASDPVRRPD). Phosphoserine; by DYRK2 is present on S997. Polar residues-rich tracts occupy residues 997 to 1009 (SHPSVDSNLTRNA), 1173 to 1190 (NPQSVQSSSGGLDSTQPH), and 1200 to 1209 (SRGSYTQQPR).

Belongs to the GLI C2H2-type zinc-finger protein family. In terms of assembly, interacts with ZIC1 and ZIC2. Interacts with STK36. Interacts with SUFU; this inhibits transcriptional activation mediated by GLI2. Interacts (via C-terminal internal region) with FOXC1 (via N-terminus); this interaction is direct and increases GLI2 DNA-binding and transcriptional activity through a smoothened (SMO)-independent Hedgehog (Hh) signaling pathway. Post-translationally, phosphorylated in vitro by ULK3. Phosphorylated by DYRK2; this inhibits GLI2 transcription factor activity and promotes proteasomal degradation of GLI2. In terms of processing, acetylation at Lys-740 inhibits Hh target gene expression, probably by impeding entry into chromatin thus preventing promoter occupancy.

It localises to the nucleus. Its subcellular location is the cytoplasm. The protein resides in the cell projection. The protein localises to the cilium. Its function is as follows. Functions as a transcription regulator in the hedgehog (Hh) pathway. Functions as a transcriptional activator. May also function as transcriptional repressor. Requires STK36 for full transcriptional activator activity. Binds to the DNA sequence 5'-GAACCACCCA-3' which is part of the TRE-2S regulatory element. Is involved in the smoothened (SHH) signaling pathway. Required for normal skeleton development. In Mus musculus (Mouse), this protein is Zinc finger protein GLI2.